An 860-amino-acid chain; its full sequence is Protein argonaute-3 (860 aa).

Methionine 1 is modified (N-acetylmethionine). In terms of domain architecture, PAZ spans 230-349; it reads PVIQFMCEVL…LPLEVCNIVA (120 aa). One can recognise a Piwi domain in the interval 518–819; sequence LIIVILPGKT…VAFRARYHLV (302 aa). Positions 530 to 567 are interaction with guide RNA; it reads YAEVKRVGDTLLGMATQCVQVKNVIKTSPQTLSNLCLK. Residues aspartate 598, glutamate 638, and aspartate 670 each contribute to the a divalent metal cation site. Residues 758–805 are interaction with guide RNA; it reads QGTSRPSHYHVLWDDNFFTADELQLLTYQLCHTYVRCTRSVSIPAPAY. Position 808 (histidine 808) interacts with a divalent metal cation. At serine 825 the chain carries Phosphoserine.

It belongs to the argonaute family. Ago subfamily. In terms of assembly, interacts with EIF4B, IMP8, PRMT5 and TNRC6B. Interacts with APOBEC3F, APOBEC3G and APOBEC3H. Interacts with EDC4. Ubiquitinated on surface-exposed lysines by a SCF-like E3 ubiquitin-protein ligase complex containing ZSWIM8 during target-directed microRNA degradation (TDMD), a process that mediates degradation of microRNAs (miRNAs). Ubiquitination by the SCF-like E3 ubiquitin-protein ligase complex containing ZSWIM8 leads to its subsequent degradation, thereby exposing miRNAs for degradation. ZSWIM8 recognizes and binds AGO3 when it is engaged with a TDMD target.

Its subcellular location is the cytoplasm. The protein localises to the P-body. The catalysed reaction is Endonucleolytic cleavage to 5'-phosphomonoester.. Its function is as follows. Required for RNA-mediated gene silencing (RNAi). Binds to short RNAs such as microRNAs (miRNAs) and represses the translation of mRNAs which are complementary to them. Proposed to be involved in stabilization of small RNA derivates (siRNA) derived from processed RNA polymerase III-transcribed Alu repeats containing a DR2 retinoic acid response element (RARE) in stem cells and in the subsequent siRNA-dependent degradation of a subset of RNA polymerase II-transcribed coding mRNAs by recruiting a mRNA decapping complex involving EDC4. Possesses RNA slicer activity but only on select RNAs bearing 5'- and 3'-flanking sequences to the region of guide-target complementarity. In Mus musculus (Mouse), this protein is Protein argonaute-3 (Ago3).